We begin with the raw amino-acid sequence, 69 residues long: Ferredoxin-1 (69 aa).

3 residues coordinate [3Fe-4S] cluster: Cys12, Cys18, and Cys57.

The cofactor is [3Fe-4S] cluster.

Its function is as follows. Electron transport protein for the cytochrome P-450-SU1 system. This is Ferredoxin-1 (suaB) from Streptomyces griseolus.